A 524-amino-acid chain; its full sequence is Gamma-taxilin (524 aa).

The span at 1–10 shows a compositional bias: basic and acidic residues; sequence MATRLEEVTR. Disordered stretches follow at residues 1 to 37 and 64 to 86; these read MATRLEEVTRGRGGGTEEASEGGRGGRRRSPPQKFEI and LQHQDPSCGGTTKKHSLEGDEGS. Arg12 and Arg24 each carry omega-N-methylarginine. Phosphoserine is present on residues Ser79, Ser86, and Ser97. Residues 106–115 are compositionally biased toward basic and acidic residues; that stretch reads REEIPGREAR. The disordered stretch occupies residues 106-130; the sequence is REEIPGREARTGPPDGQQDSECSRN. Residues 153–465 adopt a coiled-coil conformation; it reads EEKLAALCKK…KEQVSIKAAD (313 aa). Tyr283 carries the post-translational modification Phosphotyrosine. Residues 501 to 524 are disordered; sequence VCEKSAAQKPSSSGSPAQGIESVD. At Ser512 the chain carries Phosphoserine.

Belongs to the taxilin family. Binds to the C-terminal coiled coil region of syntaxin family members STX1A, STX3A and STX4A. Forms a heterodimer with ATF4 in osteoblasts.

Its subcellular location is the nucleus membrane. It localises to the cytoplasm. It is found in the cytosol. Functionally, may be involved in intracellular vesicle traffic. Inhibits ATF4-mediated transcription, possibly by dimerizing with ATF4 to form inactive dimers that cannot bind DNA. May be involved in regulating bone mass density through an ATF4-dependent pathway. May be involved in cell cycle progression. The sequence is that of Gamma-taxilin (Txlng) from Mus musculus (Mouse).